The sequence spans 145 residues: Secreted RxLR effector protein 43 (145 aa).

An N-terminal signal peptide occupies residues 1-20 (MKVTMALAALCVALQAPCIG). Positions 31 to 34 (RHLR) match the RxLR motif.

This sequence belongs to the RxLR effector family.

The protein localises to the secreted. It localises to the host nucleus. The protein resides in the host cytoplasm. Functionally, secreted effector that completely suppresses the host cell death induced by cell death-inducing proteins. This is Secreted RxLR effector protein 43 from Plasmopara viticola (Downy mildew of grapevine).